Here is a 461-residue protein sequence, read N- to C-terminus: MEKCSHESGRHSAENDGKYDITGSTATNVVDGFTMVAVGDVIVSRTLANGHHPGFSEIVELLRAADVTFGNMETLIFDIRSFNGTPQAEYGGAYHVSLPEIGPDLKAMGFNIMGRANNHSLDWGVEGMRETSRILDESGIIHAGVGESRAQASAARLLETARGRVALLSCATSFTPMSRACDPAGEAPARPGVNALRLERSVVVEPDMLESLRKIRDALPNPGPKHDDREMLVLAGTTYRTGKDVGYTYAANTRDLADILRNVRRGKQYSDFCIFTNHAHEPGNWSEEPADFEQALARKLIDAGADAYVGHGPHRLRGIEIYKRRPIFYSLGNFFYDDLRTPVGADMYDVYDKDPQVDTDAEVTAAEETMGYPTAAGFIGALAEPVYYESVVAVSRFEENQLAELRLYPIELGYSKRLANRGVPSLAPRPQAISILERLQRLSEPFGTRITIEDRVGLIRL.

Residues 1–19 (MEKCSHESGRHSAENDGKY) show a composition bias toward basic and acidic residues. A disordered region spans residues 1–21 (MEKCSHESGRHSAENDGKYDI).

It belongs to the CapA family.

Could be involved in the biosynthesis of a cell wall component. This is an uncharacterized protein from Sinorhizobium fredii (strain NBRC 101917 / NGR234).